The following is a 166-amino-acid chain: uncharacterized protein (166 aa).

The tract at residues 28–55 is disordered; that stretch reads SRQVHPPWPVPCKSKLQEQDSSESKESK. The span at 42-55 shows a compositional bias: basic and acidic residues; the sequence is KLQEQDSSESKESK. Residues 67–163 enclose the HTH araC/xylS-type domain; sequence QNAMLYIENN…NYTPKQFKRT (97 aa). DNA-binding regions (H-T-H motif) lie at residues 84 to 105 and 130 to 153; these read DTVA…KLAT and VTET…KKRT.

This is an uncharacterized protein from Pseudoalteromonas carrageenovora (Alteromonas carrageenovora).